Consider the following 763-residue polypeptide: Phosphoglycerol transferase I (763 aa).

4 helical membrane-spanning segments follow: residues 1 to 21 (MSEL…AWKA), 26 to 46 (WWFA…ITLF), 77 to 97 (ILPG…LGWI), and 108 to 128 (FGYS…SPAF).

Belongs to the OpgB family.

It is found in the cell inner membrane. The enzyme catalyses a phosphatidylglycerol + a membrane-derived-oligosaccharide D-glucose = a 1,2-diacyl-sn-glycerol + a membrane-derived-oligosaccharide 6-(glycerophospho)-D-glucose.. The protein operates within glycan metabolism; osmoregulated periplasmic glucan (OPG) biosynthesis. Functionally, transfers a phosphoglycerol residue from phosphatidylglycerol to the membrane-bound nascent glucan backbones. The chain is Phosphoglycerol transferase I from Shigella boydii serotype 18 (strain CDC 3083-94 / BS512).